The chain runs to 288 residues: 33 kDa chaperonin (288 aa).

2 cysteine pairs are disulfide-bonded: Cys-235–Cys-237 and Cys-268–Cys-271.

It belongs to the HSP33 family. In terms of processing, under oxidizing conditions two disulfide bonds are formed involving the reactive cysteines. Under reducing conditions zinc is bound to the reactive cysteines and the protein is inactive.

The protein localises to the cytoplasm. Its function is as follows. Redox regulated molecular chaperone. Protects both thermally unfolding and oxidatively damaged proteins from irreversible aggregation. Plays an important role in the bacterial defense system toward oxidative stress. This is 33 kDa chaperonin from Streptococcus thermophilus (strain CNRZ 1066).